Reading from the N-terminus, the 359-residue chain is tRNA N6-adenosine threonylcarbamoyltransferase (359 aa).

Fe cation is bound by residues histidine 115 and histidine 119. Substrate contacts are provided by residues 137 to 141, aspartate 170, glycine 183, and asparagine 283; that span reads LVSGG. Aspartate 311 serves as a coordination point for Fe cation. Positions 328–359 are disordered; it reads APDSLDIAPRSRWPLDEKSAPVFGTGRRGAKA.

This sequence belongs to the KAE1 / TsaD family. Fe(2+) is required as a cofactor.

It localises to the cytoplasm. The enzyme catalyses L-threonylcarbamoyladenylate + adenosine(37) in tRNA = N(6)-L-threonylcarbamoyladenosine(37) in tRNA + AMP + H(+). In terms of biological role, required for the formation of a threonylcarbamoyl group on adenosine at position 37 (t(6)A37) in tRNAs that read codons beginning with adenine. Is involved in the transfer of the threonylcarbamoyl moiety of threonylcarbamoyl-AMP (TC-AMP) to the N6 group of A37, together with TsaE and TsaB. TsaD likely plays a direct catalytic role in this reaction. This chain is tRNA N6-adenosine threonylcarbamoyltransferase, found in Brucella ovis (strain ATCC 25840 / 63/290 / NCTC 10512).